The following is a 777-amino-acid chain: MAKLSLSSIFFVFPLLLCFFSPSSSSSDGLESYIVHVQRSHKPSLFSSHNNWHVSLLRSLPSSPQPATLLYSYSRAVHGFSARLSPIQTAALRRHPSVISVIPDQAREIHTTHTPAFLGFSQNSGLWSNSNYGEDVIVGVLDTGIWPEHPSFSDSGLGPIPSTWKGECEIGPDFPASSCNRKLIGARAFYRGYLTQRNGTKKHAAKESRSPRDTEGHGTHTASTAAGSVVANASLYQYARGTATGMASKARIAAYKICWTGGCYDSDILAAMDQAVADGVHVISLSVGASGSAPEYHTDSIAIGAFGATRHGIVVSCSAGNSGPNPETATNIAPWILTVGASTVDREFAANAITGDGKVFTGTSLYAGESLPDSQLSLVYSGDCGSRLCYPGKLNSSLVEGKIVLCDRGGNARVEKGSAVKLAGGAGMILANTAESGEELTADSHLVPATMVGAKAGDQIRDYIKTSDSPTAKISFLGTLIGPSPPSPRVAAFSSRGPNHLTPVILKPDVIAPGVNILAGWTGMVGPTDLDIDPRRVQFNIISGTSMSCPHVSGLAALLRKAHPDWSPAAIKSALVTTAYDVENSGEPIEDLATGKSSNSFIHGAGHVDPNKALNPGLVYDIEVKEYVAFLCAVGYEFPGILVFLQDPTLYDACETSKLRTAGDLNYPSFSVVFASTGEVVKYKRVVKNVGSNVDAVYEVGVKSPANVEIDVSPSKLAFSKEKSVLEYEVTFKSVVLGGGVGSVPGHEFGSIEWTDGEHVVKSPVAVQWGQGSVQSF.

An N-terminal signal peptide occupies residues 1-25 (MAKLSLSSIFFVFPLLLCFFSPSSS). Residues 26–110 (SSDGLESYIV…VIPDQAREIH (85 aa)) constitute a propeptide, activation peptide. Positions 32-110 (SYIVHVQRSH…VIPDQAREIH (79 aa)) constitute an Inhibitor I9 domain. Positions 115 to 614 (PAFLGFSQNS…AGHVDPNKAL (500 aa)) constitute a Peptidase S8 domain. Asp-142 acts as the Charge relay system in catalysis. N-linked (GlcNAc...) asparagine glycosylation is present at Asn-198. The interval 199 to 223 (GTKKHAAKESRSPRDTEGHGTHTAS) is disordered. A compositionally biased stretch (basic and acidic residues) spans 205 to 218 (AKESRSPRDTEGHG). Residue His-217 is the Charge relay system of the active site. 2 N-linked (GlcNAc...) asparagine glycosylation sites follow: Asn-232 and Asn-395. The PA domain maps to 376–461 (LSLVYSGDCG…VGAKAGDQIR (86 aa)). Ser-546 serves as the catalytic Charge relay system.

The protein belongs to the peptidase S8 family.

Its subcellular location is the secreted. The sequence is that of Subtilisin-like protease SBT1.4 from Arabidopsis thaliana (Mouse-ear cress).